Consider the following 499-residue polypeptide: Guanosine-5'-triphosphate,3'-diphosphate pyrophosphatase (499 aa).

The protein belongs to the GppA/Ppx family. GppA subfamily.

The catalysed reaction is guanosine 3'-diphosphate 5'-triphosphate + H2O = guanosine 3',5'-bis(diphosphate) + phosphate + H(+). It participates in purine metabolism; ppGpp biosynthesis; ppGpp from GTP: step 2/2. Its function is as follows. Catalyzes the conversion of pppGpp to ppGpp. Guanosine pentaphosphate (pppGpp) is a cytoplasmic signaling molecule which together with ppGpp controls the 'stringent response', an adaptive process that allows bacteria to respond to amino acid starvation, resulting in the coordinated regulation of numerous cellular activities. This is Guanosine-5'-triphosphate,3'-diphosphate pyrophosphatase from Klebsiella pneumoniae subsp. pneumoniae (strain ATCC 700721 / MGH 78578).